Reading from the N-terminus, the 289-residue chain is MRKFTAFACGTIAGLSAYYIQRLNDPQLRVHNSWTNSETPISDCALWNSNWDFRDPKSLVRPLKNDNPQEQNRYNSELEKHVPKKARHIILIRHGEYLDVGDTDDSHHLTDRGRQQAKYTGQRLHELGITWDKVIASNMVRAQETADIILNEIDYDKANVKNCPFLREGAPIPPQPPVGHWKPEGSQFFRDGARIEAAFRRYFHRAYPEQEKESYTLIVGHGNVIRYFVCRALQFPAEAWLRISINHASITWLTISASGNVSIKYLGDSGFLPAKLLTNRIPRDAKNVV.

Belongs to the phosphoglycerate mutase family. BPG-dependent PGAM subfamily. Interacts with Pk92B/ASK1.

It is found in the mitochondrion outer membrane. It carries out the reaction O-phospho-L-seryl-[protein] + H2O = L-seryl-[protein] + phosphate. It catalyses the reaction O-phospho-L-threonyl-[protein] + H2O = L-threonyl-[protein] + phosphate. In terms of biological role, displays phosphatase activity for serine/threonine residues, and dephosphorylates and activates Pk92B kinase. Has apparently no phosphoglycerate mutase activity. This is Serine/threonine-protein phosphatase Pgam5, mitochondrial from Drosophila grimshawi (Hawaiian fruit fly).